The sequence spans 268 residues: Leucyl/phenylalanyl-tRNA--protein transferase (268 aa).

This sequence belongs to the L/F-transferase family.

The protein localises to the cytoplasm. It carries out the reaction N-terminal L-lysyl-[protein] + L-leucyl-tRNA(Leu) = N-terminal L-leucyl-L-lysyl-[protein] + tRNA(Leu) + H(+). It catalyses the reaction N-terminal L-arginyl-[protein] + L-leucyl-tRNA(Leu) = N-terminal L-leucyl-L-arginyl-[protein] + tRNA(Leu) + H(+). The catalysed reaction is L-phenylalanyl-tRNA(Phe) + an N-terminal L-alpha-aminoacyl-[protein] = an N-terminal L-phenylalanyl-L-alpha-aminoacyl-[protein] + tRNA(Phe). Functions in the N-end rule pathway of protein degradation where it conjugates Leu, Phe and, less efficiently, Met from aminoacyl-tRNAs to the N-termini of proteins containing an N-terminal arginine or lysine. This Psychrobacter arcticus (strain DSM 17307 / VKM B-2377 / 273-4) protein is Leucyl/phenylalanyl-tRNA--protein transferase.